Consider the following 141-residue polypeptide: Small ribosomal subunit protein uS9c (141 aa).

The protein belongs to the universal ribosomal protein uS9 family.

The protein localises to the plastid. It localises to the chloroplast. This chain is Small ribosomal subunit protein uS9c (rps9), found in Tupiella akineta (Green alga).